Reading from the N-terminus, the 237-residue chain is CDP-diacylglycerol--inositol 3-phosphatidyltransferase (237 aa).

Residues 1-12 (MGKNEQKDPNVY) lie on the Cytoplasmic side of the membrane. A helical membrane pass occupies residues 13–33 (FFVPNLIGFTRVFLVLISLYF). Residues 34–41 (MSWHPNYC) are Lumenal-facing. Residues 42 to 62 (TIVYLYSSLLDAFDGWAARKL) traverse the membrane as a helical segment. The Mg(2+) site is built by aspartate 52 and aspartate 55. A CDP-1,2-diacyl-sn-glycerol-binding residues include glycine 56, arginine 60, and threonine 66. Residues 63–71 (HQATNFGAI) are Cytoplasmic-facing. Residues 72-92 (LDMVTDRCATSCLLCFLCAAY) form a helical membrane-spanning segment. Mg(2+) is bound by residues aspartate 73 and aspartate 77. Catalysis depends on aspartate 77, which acts as the Proton acceptor. Residues 93-94 (PK) are Lumenal-facing. The chain crosses the membrane as a helical span at residues 95–115 (YAIIFQLLVSLDLASHYMHMY). The Cytoplasmic segment spans residues 116–144 (STLHQGASSHKTVTKKHNWMLRLYYGNNK). The helical transmembrane segment at 145-165 (VLFIFCAANEMFFVALYLLSF) threads the bilayer. Over 166–185 (TPRTPPKLGYLPVPSFIYST) the chain is Lumenal. Residues 186–206 (GELPLSYPTLLAVLCGPICLA) form a helical membrane-spanning segment. The Cytoplasmic portion of the chain corresponds to 207–237 (KQIINVVQLVNAANALVKMDVEQRRAAKKLQ).

Belongs to the CDP-alcohol phosphatidyltransferase class-I family. Mn(2+) is required as a cofactor. Mg(2+) serves as cofactor.

It is found in the microsome membrane. The protein resides in the endoplasmic reticulum membrane. It localises to the golgi apparatus membrane. The protein localises to the mitochondrion outer membrane. It carries out the reaction a CDP-1,2-diacyl-sn-glycerol + myo-inositol = a 1,2-diacyl-sn-glycero-3-phospho-(1D-myo-inositol) + CMP + H(+). In terms of biological role, catalyzes the synthesis of phosphatidylinositol (PtdIns). This is CDP-diacylglycerol--inositol 3-phosphatidyltransferase (pis1) from Schizosaccharomyces pombe (strain 972 / ATCC 24843) (Fission yeast).